Reading from the N-terminus, the 289-residue chain is 4-hydroxy-tetrahydrodipicolinate synthase (289 aa).

Thr42 is a binding site for pyruvate. Tyr129 functions as the Proton donor/acceptor in the catalytic mechanism. Lys157 acts as the Schiff-base intermediate with substrate in catalysis. Ile198 is a pyruvate binding site.

Belongs to the DapA family. As to quaternary structure, homotetramer; dimer of dimers.

The protein resides in the cytoplasm. The catalysed reaction is L-aspartate 4-semialdehyde + pyruvate = (2S,4S)-4-hydroxy-2,3,4,5-tetrahydrodipicolinate + H2O + H(+). The protein operates within amino-acid biosynthesis; L-lysine biosynthesis via DAP pathway; (S)-tetrahydrodipicolinate from L-aspartate: step 3/4. In terms of biological role, catalyzes the condensation of (S)-aspartate-beta-semialdehyde [(S)-ASA] and pyruvate to 4-hydroxy-tetrahydrodipicolinate (HTPA). The sequence is that of 4-hydroxy-tetrahydrodipicolinate synthase from Chlamydia caviae (strain ATCC VR-813 / DSM 19441 / 03DC25 / GPIC) (Chlamydophila caviae).